The chain runs to 584 residues: PE-PGRS family protein PE_PGRS11 (584 aa).

Positions 1-92 constitute a PE domain; sequence MSFVIVARDA…AATSYAVTEV (92 aa). H290 (tele-phosphohistidine intermediate) is an active-site residue. E365 acts as the Proton donor/acceptor in catalysis. The segment at 384 to 584 is phosphoglycerate mutase; the sequence is YLVGPIAWTL…LPIGLPSLIP (201 aa).

The protein in the N-terminal section; belongs to the mycobacterial PE family. PGRS subfamily. In the C-terminal section; belongs to the phosphoglycerate mutase family. As to quaternary structure, interacts with human TLR2. Mg(2+) is required as a cofactor.

It is found in the secreted. The protein localises to the cell wall. It localises to the cell surface. The enzyme catalyses (2R)-2-phosphoglycerate = (2R)-3-phosphoglycerate. In terms of biological role, induces maturation and activation of human dendritic cells (DCs), via TLR2-dependent activation of ERK1/2, p38 MAPK, and NF-kappa-B signaling pathways, and enhances the ability of DCs to stimulate CD4(+) T cells. By activating DCs, could potentially contribute to the initiation of innate immune responses during tuberculosis infection and hence regulate the clinical course of tuberculosis. Involved in resistance to oxidative stress, via TLR2-dependent activation of the PI3K-ERK1/2-NF-kappa-B signaling pathway and expression of COX-2 and Bcl2. Also abolishes H(2)O(2)-triggered activation of p38 MAPK. The polypeptide is PE-PGRS family protein PE_PGRS11 (Mycobacterium tuberculosis (strain ATCC 25618 / H37Rv)).